Consider the following 340-residue polypeptide: Ketol-acid reductoisomerase (NADP(+)) (340 aa).

In terms of domain architecture, KARI N-terminal Rossmann spans 3–182; sequence VQMEYEKDVK…GAARVGLLET (180 aa). NADP(+)-binding positions include 26–29, R49, S53, and 83–86; these read YGSQ and DEIQ. H108 is an active-site residue. G134 lines the NADP(+) pocket. The region spanning 183-328 is the KARI C-terminal knotted domain; it reads TYKEETEEDL…AELRKAMPFV (146 aa). Positions 191, 195, 227, and 231 each coordinate Mg(2+). Residue S252 coordinates substrate.

It belongs to the ketol-acid reductoisomerase family. Requires Mg(2+) as cofactor.

The catalysed reaction is (2R)-2,3-dihydroxy-3-methylbutanoate + NADP(+) = (2S)-2-acetolactate + NADPH + H(+). It catalyses the reaction (2R,3R)-2,3-dihydroxy-3-methylpentanoate + NADP(+) = (S)-2-ethyl-2-hydroxy-3-oxobutanoate + NADPH + H(+). Its pathway is amino-acid biosynthesis; L-isoleucine biosynthesis; L-isoleucine from 2-oxobutanoate: step 2/4. The protein operates within amino-acid biosynthesis; L-valine biosynthesis; L-valine from pyruvate: step 2/4. Functionally, involved in the biosynthesis of branched-chain amino acids (BCAA). Catalyzes an alkyl-migration followed by a ketol-acid reduction of (S)-2-acetolactate (S2AL) to yield (R)-2,3-dihydroxy-isovalerate. In the isomerase reaction, S2AL is rearranged via a Mg-dependent methyl migration to produce 3-hydroxy-3-methyl-2-ketobutyrate (HMKB). In the reductase reaction, this 2-ketoacid undergoes a metal-dependent reduction by NADPH to yield (R)-2,3-dihydroxy-isovalerate. The protein is Ketol-acid reductoisomerase (NADP(+)) of Streptococcus gordonii (strain Challis / ATCC 35105 / BCRC 15272 / CH1 / DL1 / V288).